The chain runs to 624 residues: Pentatricopeptide repeat-containing protein At2g32630 (624 aa).

13 PPR repeats span residues F153–I187, D188–I222, T223–P257, E258–Y292, N293–S327, D328–P362, S363–I397, T398–A432, D433–L467, S468–P502, N503–P537, D538–Q572, and N573–I607.

Belongs to the PPR family. P subfamily.

This is Pentatricopeptide repeat-containing protein At2g32630 from Arabidopsis thaliana (Mouse-ear cress).